We begin with the raw amino-acid sequence, 139 residues long: ATP synthase epsilon chain (139 aa).

A disordered region spans residues 89 to 110 (EARAEQARAEAEARRREAQSEH).

Belongs to the ATPase epsilon chain family. As to quaternary structure, F-type ATPases have 2 components, CF(1) - the catalytic core - and CF(0) - the membrane proton channel. CF(1) has five subunits: alpha(3), beta(3), gamma(1), delta(1), epsilon(1). CF(0) has three main subunits: a, b and c.

Its subcellular location is the cell membrane. Functionally, produces ATP from ADP in the presence of a proton gradient across the membrane. This is ATP synthase epsilon chain from Chloroflexus aggregans (strain MD-66 / DSM 9485).